Reading from the N-terminus, the 322-residue chain is AA9 family lytic polysaccharide monooxygenase A (322 aa).

The first 15 residues, Met-1 to Ala-15, serve as a signal peptide directing secretion. The Cu(2+) site is built by His-16 and His-96. Disulfide bonds link Cys-54-Cys-182 and Cys-152-Cys-237. O2-binding residues include His-168 and Gln-177. O-linked (Man...) threonine glycans are attached at residues Thr-228 and Thr-236. One can recognise a CBM1 domain in the interval Cys-286–Ser-322.

The protein belongs to the polysaccharide monooxygenase AA9 family. The cofactor is Cu(2+).

It localises to the secreted. It catalyses the reaction [(1-&gt;4)-beta-D-glucosyl]n+m + reduced acceptor + O2 = 4-dehydro-beta-D-glucosyl-[(1-&gt;4)-beta-D-glucosyl]n-1 + [(1-&gt;4)-beta-D-glucosyl]m + acceptor + H2O.. Functionally, lytic polysaccharide monooxygenase (LPMO) that depolymerizes crystalline and amorphous polysaccharides via the oxidation of scissile alpha- or beta-(1-4)-glycosidic bonds, yielding C4 oxidation products. Catalysis by LPMOs requires the reduction of the active-site copper from Cu(II) to Cu(I) by a reducing agent and H(2)O(2) or O(2) as a cosubstrate. Active on tamarind xyloglucan and konjac glucomannan. This Neurospora crassa (strain ATCC 24698 / 74-OR23-1A / CBS 708.71 / DSM 1257 / FGSC 987) protein is AA9 family lytic polysaccharide monooxygenase A (gh61-1).